We begin with the raw amino-acid sequence, 53 residues long: Cytochrome c oxidase subunit 7e (53 aa).

As to quaternary structure, slime mold cytochrome c oxidase consists of at least seven different polypeptides species, subunits I, II, III, IV, V, VI, and VIIe/s in order of MW.

The protein resides in the mitochondrion inner membrane. It carries out the reaction 4 Fe(II)-[cytochrome c] + O2 + 8 H(+)(in) = 4 Fe(III)-[cytochrome c] + 2 H2O + 4 H(+)(out). In terms of biological role, this protein is one of the nuclear-coded polypeptide chains of cytochrome c oxidase, the terminal oxidase in mitochondrial electron transport. The polypeptide is Cytochrome c oxidase subunit 7e (cxgE) (Dictyostelium discoideum (Social amoeba)).